Consider the following 398-residue polypeptide: Na(+)/H(+) antiporter NhaA 2 (398 aa).

Helical transmembrane passes span 17-37 (ILLMLAVAMAMLLANSPLAGL), 59-79 (LLLWVNDGLMALFFLLIGLEV), 95-115 (SLPTFAAIGGMVFPALVYLGF), 125-145 (GWAIPAATDIAFALGVLALLG), 154-174 (VFLLALAIIDDIGVIVIIALF), 179-199 (LSITSLVIAAIAIGSMVILNL), 213-233 (LLLWIAVLKSGVHATLAGVVI), 262-282 (FMILPLFAFANAGLSLSGMSL), 288-308 (PAALGVMLGLLLGKPLGVLLF), 331-351 (AVAVLCGVGFTMSIFISSLAF), and 364-384 (LGTLVGSMLSASIAYFWLTKV).

Belongs to the NhaA Na(+)/H(+) (TC 2.A.33) antiporter family.

The protein localises to the cell inner membrane. It carries out the reaction Na(+)(in) + 2 H(+)(out) = Na(+)(out) + 2 H(+)(in). Na(+)/H(+) antiporter that extrudes sodium in exchange for external protons. In Shewanella denitrificans (strain OS217 / ATCC BAA-1090 / DSM 15013), this protein is Na(+)/H(+) antiporter NhaA 2.